Reading from the N-terminus, the 127-residue chain is MSTISKEDVIKFIENMTVLELSELVKELEERFGVSAAAPVAMAAMPAGAAEAAPVAEQTEFSVVITGVGDKKIQVIKEVRAITNLGLKEAKDLVEKVPGVVKEAIPKDEAEAIAKQLTEAGATVEIK.

This sequence belongs to the bacterial ribosomal protein bL12 family. As to quaternary structure, homodimer. Part of the ribosomal stalk of the 50S ribosomal subunit. Forms a multimeric L10(L12)X complex, where L10 forms an elongated spine to which 2 to 4 L12 dimers bind in a sequential fashion. Binds GTP-bound translation factors.

In terms of biological role, forms part of the ribosomal stalk which helps the ribosome interact with GTP-bound translation factors. Is thus essential for accurate translation. The polypeptide is Large ribosomal subunit protein bL12 (Syntrophobacter fumaroxidans (strain DSM 10017 / MPOB)).